The following is a 391-amino-acid chain: Histidinol-phosphate aminotransferase (391 aa).

K245 is modified (N6-(pyridoxal phosphate)lysine).

Belongs to the class-II pyridoxal-phosphate-dependent aminotransferase family. Histidinol-phosphate aminotransferase subfamily. Homodimer. The cofactor is pyridoxal 5'-phosphate.

The catalysed reaction is L-histidinol phosphate + 2-oxoglutarate = 3-(imidazol-4-yl)-2-oxopropyl phosphate + L-glutamate. It functions in the pathway amino-acid biosynthesis; L-histidine biosynthesis; L-histidine from 5-phospho-alpha-D-ribose 1-diphosphate: step 7/9. The protein is Histidinol-phosphate aminotransferase of Bifidobacterium adolescentis (strain ATCC 15703 / DSM 20083 / NCTC 11814 / E194a).